We begin with the raw amino-acid sequence, 78 residues long: Acyl carrier protein (78 aa).

The region spanning 2–77 (SNIEERVKKI…AAIDYVTSNA (76 aa)) is the Carrier domain. The residue at position 37 (Ser-37) is an O-(pantetheine 4'-phosphoryl)serine.

The protein belongs to the acyl carrier protein (ACP) family. 4'-phosphopantetheine is transferred from CoA to a specific serine of apo-ACP by AcpS. This modification is essential for activity because fatty acids are bound in thioester linkage to the sulfhydryl of the prosthetic group.

It is found in the cytoplasm. It participates in lipid metabolism; fatty acid biosynthesis. Its function is as follows. Carrier of the growing fatty acid chain in fatty acid biosynthesis. This is Acyl carrier protein from Vibrio cholerae serotype O1 (strain ATCC 39315 / El Tor Inaba N16961).